We begin with the raw amino-acid sequence, 87 residues long: Small ribosomal subunit protein bS20 (87 aa).

Residues 1-26 (MANTAQAKKRVRQNIKQRERNSGLRS) are disordered.

This sequence belongs to the bacterial ribosomal protein bS20 family.

Its function is as follows. Binds directly to 16S ribosomal RNA. This Nitrosomonas eutropha (strain DSM 101675 / C91 / Nm57) protein is Small ribosomal subunit protein bS20.